A 267-amino-acid chain; its full sequence is MVSAKKTVLITGCSEGGMGAALAVAFKEAGFRVYATARDPSKMASLSRAGIETLTLDILSSESIATCASSVSSLDILVNNAGSSYSMPVADMDINYAKQLFDVNVWAQLAVSQAFLPHLIKSKGMISAYNASKAAISMFSDCQRLELEPFGVKVIDLKTGAVASNLIKNQKTLTPITLPRDSIYEPARDAVEAAMRNDKMADVGTPANQWAKEVVGDLTRKSPPLVIWRGANAKLGRFGTIMPHGMMDSTIKKMTGLDVVEQKVRVA.

Isoleucine 10, threonine 36, lysine 42, aspartate 57, asparagine 80, tyrosine 129, lysine 133, valine 162, and serine 164 together coordinate NADP(+). The active-site Proton acceptor is tyrosine 129. Lysine 133 functions as the Lowers pKa of active site Tyr in the catalytic mechanism.

It belongs to the short-chain dehydrogenases/reductases (SDR) family.

Its pathway is secondary metabolite biosynthesis. Functionally, short-chain dehydrogenase/reductase; part of the gene cluster that mediates the biosynthesis of dibenzodioxocinones such as pestalotiollide B, a novel class of inhibitors against cholesterol ester transfer protein (CEPT). The biosynthesis initiates from condensation of acetate and malonate units catalyzed by the non-reducing PKS pks8/GME11356. Pks8/GME11356 lacks a thioesterase (TE) domain, which is important to the cyclizing of the third ring of atrochrysone carboxylic acid, and the esterase GME11355 might play the role of TE and catalyzes the cyclization reaction of the C ring. The lactamase-like protein GME11357 (or other beta-lactamases in Pestalotiopsis microspora) probably hydrolyzes the thioester bond between the ACP of pks8/GME11356 and the intermediate to release atrochrysone carboxylic acid, which is spontaneously dehydrates to form endocrocin anthrone. Endocrocin anthrone is further converted to emodin via the endocrocin intermediate. Emodin is then oxidized by several enzymes such as the Baeyer-Villiger oxidase GME11358, the oxidoreductase GME11367, the short chain dehydrogenase/reductase GME11373, as well as by other oxidoreductases from the cluster, to modify the A and C rings and open the B ring, and finally yield monodictyphenone. The prenyltransferase GME11375 may catalyze the addition reaction between the C5 side chains and the carbon bone of dibenzodioxocinones. The remaining biochemical reactions to the final product dibenzodioxocinones should be methylation catalyzed by methyltransferase GME11366 and reduction and lactonization reaction catalyzed by a series of oxidordeuctases. The polypeptide is Short-chain dehydrogenase/reductase GME11361 (Pestalotiopsis microspora).